Reading from the N-terminus, the 272-residue chain is MSAGEISTPQEYIGHHLNNLQLDLRTFELVNPHDGPASFWTLNIDSMFFSVVLGLIFLALFRKVAKNATSGVPGKFQTAVELIIGFVDGSVRDMYHGKSKLIAPLALTIFVWVFLMNLMDLVPIDFLPYIAEHWMGLPALRVVPSADVNITLSMALGVFILILFYSIKMKGVGGFVKELTLQPFNHPVFIPVNLILEGVSLLSKPVSLGLRLFGNMYAGELIFILIAGLLPWWSQWLLNVPWAIFHILIITLQAFIFMVLTIVYLSMASEEH.

The next 5 membrane-spanning stretches (helical) occupy residues 41 to 61 (TLNIDSMFFSVVLGLIFLALF), 102 to 122 (IAPLALTIFVWVFLMNLMDLV), 147 to 167 (DVNITLSMALGVFILILFYSI), 212 to 232 (LFGNMYAGELIFILIAGLLPW), and 243 to 263 (AIFHILIITLQAFIFMVLTIV).

This sequence belongs to the ATPase A chain family. In terms of assembly, F-type ATPases have 2 components, CF(1) - the catalytic core - and CF(0) - the membrane proton channel. CF(1) has five subunits: alpha(3), beta(3), gamma(1), delta(1), epsilon(1). CF(0) has three main subunits: a(1), b(2) and c(9-12). The alpha and beta chains form an alternating ring which encloses part of the gamma chain. CF(1) is attached to CF(0) by a central stalk formed by the gamma and epsilon chains, while a peripheral stalk is formed by the delta and b chains.

Its subcellular location is the cell inner membrane. In terms of biological role, key component of the proton channel; it plays a direct role in the translocation of protons across the membrane. In Edwardsiella ictaluri (strain 93-146), this protein is ATP synthase subunit a.